A 362-amino-acid chain; its full sequence is Protein BIG GRAIN 1-like D (362 aa).

3 disordered regions span residues 22–113, 132–168, and 303–327; these read IDPK…TLFH, KFNRHDENWENTRNRRSVKSSGNQKKPKTPASPGGRI, and VKTNGFEDYEDDDEDDDDDDVASDS. The span at 23–47 shows a compositional bias: polar residues; it reads DPKTQKTQPYVGSVNTTTKKQSIVT. Over residues 50-60 the composition is skewed to basic and acidic residues; sequence VPDRKIHRDRF. Residues 63–78 are compositionally biased toward low complexity; it reads SVSSSSDSNSSIFSSS. A compositionally biased stretch (basic and acidic residues) spans 132–144; it reads KFNRHDENWENTR. Over residues 309-324 the composition is skewed to acidic residues; the sequence is EDYEDDDEDDDDDDVA.

Belongs to the BIG GRAIN 1 (BG1) plant protein family.

It is found in the cell membrane. In terms of biological role, involved in auxin transport. Regulator of the auxin signaling pathway. This is Protein BIG GRAIN 1-like D from Arabidopsis thaliana (Mouse-ear cress).